A 311-amino-acid chain; its full sequence is Oxygen-dependent coproporphyrinogen-III oxidase (311 aa).

Residue Ser-93 coordinates substrate. A divalent metal cation is bound by residues His-97 and His-107. Residue His-107 is the Proton donor of the active site. 109-111 (NVR) contacts substrate. His-153 and His-184 together coordinate a divalent metal cation. Positions 252-287 (YVEFNLVFDRGTLFGLQSGGRTESILMSLPPVVKWR) are important for dimerization. 270-272 (GGR) is a substrate binding site.

This sequence belongs to the aerobic coproporphyrinogen-III oxidase family. Homodimer. It depends on a divalent metal cation as a cofactor.

It localises to the cytoplasm. The catalysed reaction is coproporphyrinogen III + O2 + 2 H(+) = protoporphyrinogen IX + 2 CO2 + 2 H2O. It participates in porphyrin-containing compound metabolism; protoporphyrin-IX biosynthesis; protoporphyrinogen-IX from coproporphyrinogen-III (O2 route): step 1/1. Functionally, involved in the heme biosynthesis. Catalyzes the aerobic oxidative decarboxylation of propionate groups of rings A and B of coproporphyrinogen-III to yield the vinyl groups in protoporphyrinogen-IX. The chain is Oxygen-dependent coproporphyrinogen-III oxidase from Aromatoleum aromaticum (strain DSM 19018 / LMG 30748 / EbN1) (Azoarcus sp. (strain EbN1)).